Here is a 513-residue protein sequence, read N- to C-terminus: U3 small nucleolar RNA-associated protein 15 (513 aa).

WD repeat units follow at residues 37–78, 79–118, 124–162, 166–206, 210–247, and 250–294; these read KEHN…KTFS, RFKD…TILL, THPT…EPQL, GATD…STPI, NHDQ…KLYE, and NFNK…QVKF. The interval 332–354 is disordered; the sequence is KKKEKRSSDKENAPASFNKNAKS.

Interacts with snoRNA U3. Interacts with MPP10. Component of the ribosomal small subunit (SSU) processome composed of at least 40 protein subunits and snoRNA U3. In the absence of snoRNA3, forms a complex with other t-UTPs. This complex can associate with pre-18S ribosomal RNAs.

It localises to the nucleus. The protein localises to the nucleolus. In terms of biological role, involved in nucleolar processing of pre-18S ribosomal RNA. Required for optimal pre-ribosomal RNA transcription by RNA polymerase I together with a subset of U3 proteins required for transcription (t-UTPs). In Saccharomyces cerevisiae (strain ATCC 204508 / S288c) (Baker's yeast), this protein is U3 small nucleolar RNA-associated protein 15 (UTP15).